A 437-amino-acid polypeptide reads, in one-letter code: F-box/FBD/LRR-repeat protein At5g22700 (437 aa).

Residues Gly-5–Asp-51 enclose the F-box domain. 7 LRR repeats span residues Arg-86 to Cys-113, Ser-134 to Glu-160, Asn-161 to Arg-186, Ile-187 to Leu-210, Gly-215 to Asp-240, Pro-272 to Gly-297, and Asn-322 to Leu-350. The region spanning Arg-361–Val-406 is the FBD domain.

The polypeptide is F-box/FBD/LRR-repeat protein At5g22700 (Arabidopsis thaliana (Mouse-ear cress)).